The sequence spans 930 residues: Protein translocase subunit SecA (930 aa).

Residues glutamine 87, 105 to 109, and aspartate 515 each bind ATP; that span reads GEGKT. Zn(2+)-binding residues include cysteine 914, cysteine 916, cysteine 925, and histidine 926.

It belongs to the SecA family. In terms of assembly, monomer and homodimer. Part of the essential Sec protein translocation apparatus which comprises SecA, SecYEG and auxiliary proteins SecDF-YajC and YidC. It depends on Zn(2+) as a cofactor.

It localises to the cell inner membrane. Its subcellular location is the cytoplasm. The enzyme catalyses ATP + H2O + cellular proteinSide 1 = ADP + phosphate + cellular proteinSide 2.. Its function is as follows. Part of the Sec protein translocase complex. Interacts with the SecYEG preprotein conducting channel. Has a central role in coupling the hydrolysis of ATP to the transfer of proteins into and across the cell membrane, serving both as a receptor for the preprotein-SecB complex and as an ATP-driven molecular motor driving the stepwise translocation of polypeptide chains across the membrane. In Burkholderia thailandensis (strain ATCC 700388 / DSM 13276 / CCUG 48851 / CIP 106301 / E264), this protein is Protein translocase subunit SecA.